The following is a 566-amino-acid chain: Pyrophosphate--fructose 6-phosphate 1-phosphotransferase subunit beta 1 (566 aa).

Phosphoserine is present on Ser16. Residue Gly105 participates in diphosphate binding. Asp199 is a Mg(2+) binding site. Residues 227–229 (TID), 266–267 (KY), 274–276 (MGR), Glu335, and 440–443 (YEGR) contribute to the substrate site. Residue Asp229 is the Proton acceptor of the active site.

This sequence belongs to the phosphofructokinase type A (PFKA) family. PPi-dependent PFK group II subfamily. Clade 'Long' sub-subfamily. In terms of assembly, tetramer of two alpha (regulatory) and two beta (catalytic) chains. The cofactor is Mg(2+).

Its subcellular location is the cytoplasm. The catalysed reaction is beta-D-fructose 6-phosphate + diphosphate = beta-D-fructose 1,6-bisphosphate + phosphate + H(+). The protein operates within carbohydrate degradation; glycolysis; D-glyceraldehyde 3-phosphate and glycerone phosphate from D-glucose: step 3/4. Allosterically activated by fructose 2,6-bisphosphate. Catalytic subunit of pyrophosphate--fructose 6-phosphate 1-phosphotransferase. Catalyzes the phosphorylation of D-fructose 6-phosphate, the first committing step of glycolysis. Uses inorganic phosphate (PPi) as phosphoryl donor instead of ATP like common ATP-dependent phosphofructokinases (ATP-PFKs), which renders the reaction reversible, and can thus function both in glycolysis and gluconeogenesis. This is Pyrophosphate--fructose 6-phosphate 1-phosphotransferase subunit beta 1 from Arabidopsis thaliana (Mouse-ear cress).